The chain runs to 81 residues: Consomatin Le1 (81 aa).

Residues 1 to 22 (MQTAYWVMVMMMVWITAPLSEG) form the signal peptide. Residues 23–57 (GKPNDVIRGLVPDDLTPQLILRSLISRRRSDKDVR) constitute a propeptide that is removed on maturation. The residue at position 58 (Glu-58) is a 4-carboxyglutamate. Cys-62 and Cys-67 form a disulfide bridge. Trp-64 bears the D-tryptophan mark. At Pro-69 the chain carries 4-hydroxyproline. Positions 71–81 (LWRRHDLKGKD) are excised as a propeptide.

It belongs to the conotoxin C superfamily. Consomatin family. In terms of tissue distribution, expressed by the venom duct.

It is found in the secreted. In terms of biological role, moderately activates human somatostatin receptors (SSTR) with a preferential activation of SSTR1 and SSTR4. In vivo, does not cause behavioral changes in mice within a few minutes of intracranial injection, but causes a progressive loss of movement thereafter. Four to five hours after injection, mice recover, even with the highest dose tested. Shows antinociception and antihyperalgesia activities in two mouse models of acute pain, most probably by acting outside the central nervous system. This Conus lenavati (Cone snail) protein is Consomatin Le1.